The sequence spans 135 residues: Large ribosomal subunit protein uL16m (135 aa).

Belongs to the universal ribosomal protein uL16 family.

The protein resides in the mitochondrion. The protein is Large ribosomal subunit protein uL16m (RPL16) of Prototheca wickerhamii.